The chain runs to 1524 residues: DNA-directed RNA polymerase subunit beta' (1524 aa).

Zn(2+)-binding residues include cysteine 58, cysteine 60, cysteine 73, and cysteine 76. 3 residues coordinate Mg(2+): aspartate 739, aspartate 741, and aspartate 743. Zn(2+)-binding residues include cysteine 1112, cysteine 1194, cysteine 1201, and cysteine 1204. The tract at residues 1501-1524 is disordered; it reads EAVEAKERPAARRGVKREQPGKQA.

The protein belongs to the RNA polymerase beta' chain family. The RNAP catalytic core consists of 2 alpha, 1 beta, 1 beta' and 1 omega subunit. When a sigma factor is associated with the core the holoenzyme is formed, which can initiate transcription. The cofactor is Mg(2+). It depends on Zn(2+) as a cofactor.

The enzyme catalyses RNA(n) + a ribonucleoside 5'-triphosphate = RNA(n+1) + diphosphate. Functionally, DNA-dependent RNA polymerase catalyzes the transcription of DNA into RNA using the four ribonucleoside triphosphates as substrates. In Thermus thermophilus (strain ATCC BAA-163 / DSM 7039 / HB27), this protein is DNA-directed RNA polymerase subunit beta'.